Here is a 373-residue protein sequence, read N- to C-terminus: MNDTQDFISAQAAVLRQVGGPLAVEPVRISMPKGDEVLIRIAGVGVCHTDLVCRDGFPVPLPIVLGHEGSGTVEAVGEQVRTLKPGDRVVLSFNSCGHCGNCHDGHPSNCLQMLPLNFGGAQRVDGGQVLDGAGHPVQSMFFGQSSFGTHAVAREINAVKVGDDLPLELLGPLGCGIQTGAGAAINSLGIGPGQSLAIFGGGGVGLSALLGARAVGADRVVVIEPNAARRALALELGASHALDPHAEGDLVAAIKAATGGGATHSLDTTGLPPVIGSAIACTLPGGTVGMVGLPAPDAPVPATLLDLLSKSVTLRPITEGDADPQRFIPRMLDFHRAGKFPFDRLITRYRFDQINEALHATEKGEAIKPVLVF.

C47, H67, C96, C99, C102, C110, and C175 together coordinate Zn(2+).

It belongs to the zinc-containing alcohol dehydrogenase family. In terms of assembly, homodimer. Zn(2+) is required as a cofactor.

The catalysed reaction is (2E)-geraniol + NAD(+) = (2E)-geranial + NADH + H(+). The enzyme catalyses perillyl alcohol + NAD(+) = perillyl aldehyde + NADH + H(+). It participates in terpene metabolism; monoterpene degradation. Its activity is regulated as follows. Is inhibited by EDTA, N-ethylmaleimide, diethylpyrocarbonate, and 1-cyclohexyl-N-(2-morpholinoethyl)carbodiimide in vitro. Its function is as follows. Involved in the degradation of the monoterpenes beta-myrcene and limonene. During anaerobic degradation of beta-myrcene, catalyzes the NAD(+)-dependent oxidation of geraniol to geranial. Can also catalyze the oxidation of (S)-perillyl alcohol to perillyl aldehyde, and to a lesser extent, the oxidation of nerol, citronellol, cumic alcohol, and benzyl alcohol. Cannot use NADP(+) instead of NAD(+) as cosubstrate. The protein is Geraniol dehydrogenase of Castellaniella defragrans (strain DSM 12143 / CCUG 39792 / 65Phen) (Alcaligenes defragrans).